The chain runs to 859 residues: DNA-directed RNA polymerase subunit Rpo1C (859 aa).

This sequence belongs to the RNA polymerase beta' chain family. Part of the RNA polymerase complex. This protein undergoes a protein self splicing that involves a post-translational excision of the intervening region (intein) followed by peptide ligation.

The protein localises to the cytoplasm. It catalyses the reaction RNA(n) + a ribonucleoside 5'-triphosphate = RNA(n+1) + diphosphate. In terms of biological role, DNA-dependent RNA polymerase (RNAP) catalyzes the transcription of DNA into RNA using the four ribonucleoside triphosphates as substrates. Forms part of the jaw domain. In Methanocaldococcus jannaschii (strain ATCC 43067 / DSM 2661 / JAL-1 / JCM 10045 / NBRC 100440) (Methanococcus jannaschii), this protein is DNA-directed RNA polymerase subunit Rpo1C.